Here is a 667-residue protein sequence, read N- to C-terminus: Leucine zipper putative tumor suppressor 2 (667 aa).

Residues 1–25 (MAIVQTLPVPLEPAPEAATAQQAPA) show a composition bias toward low complexity. Disordered stretches follow at residues 1-132 (MAIV…PVSG), 150-325 (PVLP…DEAL), and 516-541 (QEAERLREKAGQLDSEAAGLREPPVP). The interval 1-333 (MAIVQTLPVP…ALLHCVLEGK (333 aa)) is required for centrosomal localization. Positions 172–181 (PSGSQGSLTQ) are enriched in polar residues. Residues 187 to 198 (ASSSSSSSSSAA) show a composition bias toward low complexity. The segment covering 212 to 232 (PSGTLSDSGRNSLSSLPTYST) has biased composition (polar residues). Over residues 241–282 (SPGGHLPSHGPGRGALPGPARGAPTGPSHSDSGRSSSSKSTG) the composition is skewed to low complexity. At serine 248 the chain carries Phosphoserine. A compositionally biased stretch (gly residues) spans 283–294 (SLGGRLAGGLLG). Serine 295 bears the Phosphoserine mark. Over residues 310–321 (SPPPPPPPPPPS) the composition is skewed to pro residues. Residues 329 to 647 (VLEGKLRDRE…LELEARELAD (319 aa)) are a coiled coil. Residues 445–667 (SGEISLLKQQ…CLEEITATEI (223 aa)) are sufficient for interaction with CTNNB1. The segment at 448 to 667 (ISLLKQQLKE…CLEEITATEI (220 aa)) is sufficient for interaction with KATNB1 and for inhibition of katanin-mediated microtubule severing. Basic and acidic residues predominate over residues 516-526 (QEAERLREKAG). Serine 568 is subject to Phosphoserine. The Nuclear export signal signature appears at 629–638 (LEQELQQLSL).

It belongs to the LZTS2 family. As to quaternary structure, interacts with KATNB1. Also interacts with CTNNB1, gamma-tubulin and KIF23.

It localises to the cytoplasm. It is found in the cytoskeleton. Its subcellular location is the microtubule organizing center. The protein localises to the centrosome. In terms of biological role, negative regulator of katanin-mediated microtubule severing and release from the centrosome. Required for central spindle formation and the completion of cytokinesis. May negatively regulate axonal outgrowth by preventing the formation of microtubule bundles that are necessary for transport within the elongating axon. Negative regulator of the Wnt signaling pathway. Represses beta-catenin-mediated transcriptional activation by promoting the nuclear exclusion of beta-catenin. This is Leucine zipper putative tumor suppressor 2 from Bos taurus (Bovine).